Consider the following 129-residue polypeptide: Small ribosomal subunit protein uS11 (129 aa).

It belongs to the universal ribosomal protein uS11 family. Part of the 30S ribosomal subunit. Interacts with proteins S7 and S18. Binds to IF-3.

In terms of biological role, located on the platform of the 30S subunit, it bridges several disparate RNA helices of the 16S rRNA. Forms part of the Shine-Dalgarno cleft in the 70S ribosome. The protein is Small ribosomal subunit protein uS11 of Geobacillus sp. (strain WCH70).